The primary structure comprises 105 residues: Small cysteine and glycine repeat-containing protein 6 (105 aa).

Residues 4–83 (CGCGGCGGGC…HSCGCGCGCG (80 aa)) form a 13 X 2 AA repeats of CG region.

It belongs to the KRTAP type 28 family.

In terms of biological role, in the hair cortex, hair keratin intermediate filaments are embedded in an interfilamentous matrix, consisting of hair keratin-associated proteins (KRTAP), which are essential for the formation of a rigid and resistant hair shaft through their extensive disulfide bond cross-linking with abundant cysteine residues of hair keratins. The matrix proteins include the high-sulfur and high-glycine-tyrosine keratins. In Homo sapiens (Human), this protein is Small cysteine and glycine repeat-containing protein 6.